Reading from the N-terminus, the 192-residue chain is MGKRPVKEALVGDLQKLLEKSSVVMVIDYRGLSVAEITGLRRRMREHGGTCVVAKNTLMGVATRETAWRNIDPLLAGPSAFLFGNEKLKEMLKTYEDFARETKKTEFRGAVVDGTLVTLDGLKAIADLPPKEVLLAQFAGALKVLPTKIAVGINQVPTKVAVGINEVPAGLARVLEALRKQKEEQQQPQAAA.

The protein belongs to the universal ribosomal protein uL10 family. Part of the ribosomal stalk of the 50S ribosomal subunit. The N-terminus interacts with L11 and the large rRNA to form the base of the stalk. The C-terminus forms an elongated spine to which L12 dimers bind in a sequential fashion forming a multimeric L10(L12)X complex.

Forms part of the ribosomal stalk, playing a central role in the interaction of the ribosome with GTP-bound translation factors. The protein is Large ribosomal subunit protein uL10 of Gloeobacter violaceus (strain ATCC 29082 / PCC 7421).